The following is a 167-amino-acid chain: uncharacterized protein (167 aa).

A coiled-coil region spans residues 70-118 (KIVELRKAMESIITELAYIKGELKGLQEKGESKVERKEIIEEKIQKAMV). Basic and acidic residues predominate over residues 128–155 (EKEERKPAKESKRREHDVIIPEGKKEER). A disordered region spans residues 128 to 167 (EKEERKPAKESKRREHDVIIPEGKKEERTDDGEDGLIVCD).

This is an uncharacterized protein from Archaeoglobus fulgidus (strain ATCC 49558 / DSM 4304 / JCM 9628 / NBRC 100126 / VC-16).